Here is a 333-residue protein sequence, read N- to C-terminus: NADH-quinone oxidoreductase subunit H (333 aa).

A run of 8 helical transmembrane segments spans residues 17–37, 91–111, 116–136, 156–176, 188–208, 244–264, 272–292, and 310–330; these read VIQAIVILLVVVLVAALMSFI, VAMATAVLSFIVIPVSPTLGV, IGLLFFMAMAGIAVYAVLFGG, ISYEVFLGISLMGVVAIAGSF, MWFIVPQFLGFMIFVVAGVAV, YVNIVLISALIVTLFFGGWLA, FIPPVFWFIVKTAFFVMMFVL, and WKVCLPLALVNLMVTGAVILM.

Belongs to the complex I subunit 1 family. As to quaternary structure, NDH-1 is composed of 14 different subunits. Subunits NuoA, H, J, K, L, M, N constitute the membrane sector of the complex.

Its subcellular location is the cell inner membrane. The catalysed reaction is a quinone + NADH + 5 H(+)(in) = a quinol + NAD(+) + 4 H(+)(out). NDH-1 shuttles electrons from NADH, via FMN and iron-sulfur (Fe-S) centers, to quinones in the respiratory chain. The immediate electron acceptor for the enzyme in this species is believed to be ubiquinone. Couples the redox reaction to proton translocation (for every two electrons transferred, four hydrogen ions are translocated across the cytoplasmic membrane), and thus conserves the redox energy in a proton gradient. This subunit may bind ubiquinone. The sequence is that of NADH-quinone oxidoreductase subunit H from Acinetobacter baylyi (strain ATCC 33305 / BD413 / ADP1).